Here is a 106-residue protein sequence, read N- to C-terminus: uncharacterized protein (106 aa).

2 consecutive transmembrane segments (helical) span residues 53–70 (LLLLTAAILYIVMPLDII) and 74–93 (ILGLGFIDDAAVLGLIWTLI).

Its subcellular location is the cell membrane. This is an uncharacterized protein from Bacillus subtilis (strain 168).